Here is a 146-residue protein sequence, read N- to C-terminus: uncharacterized protein (146 aa).

Residues 7 to 27 (FVLSITIVLVILIIIAYIWYN) form a helical membrane-spanning segment.

It belongs to the asfivirus E146L family.

It is found in the host membrane. The protein resides in the virion. This is an uncharacterized protein from Ornithodoros (relapsing fever ticks).